A 296-amino-acid polypeptide reads, in one-letter code: Transmembrane O-methyltransferase (296 aa).

Residues 36–56 traverse the membrane as a helical segment; the sequence is VGTMSPAIALAFLPLVVTLLV. S-adenosyl-L-methionine is bound by residues E142, 144-145, S150, E168, and S198; that span reads GT.

This sequence belongs to the class I-like SAM-binding methyltransferase superfamily. Cation-dependent O-methyltransferase family. As to quaternary structure, interacts with LHFPL5, PCDH15, TMC1, TMC2 and TMIE. Interacts directly with TMC1. The interaction of TOMT with TMC1 and TMC2 is required for the transportation of TMC1/2 into the stereocilia of hair cells.

The protein localises to the membrane. It localises to the cytoplasm. The protein resides in the endoplasmic reticulum. The enzyme catalyses a catechol + S-adenosyl-L-methionine = a guaiacol + S-adenosyl-L-homocysteine + H(+). Its function is as follows. Catalyzes the O-methylation, and thereby the inactivation, of catecholamine neurotransmitters and catechol hormones. Required for auditory function. Component of the cochlear hair cell's mechanotransduction (MET) machinery. Involved in the assembly of the asymmetric tip-link MET complex. Required for transportation of TMC1 and TMC2 proteins into the mechanically sensitive stereocilia of the hair cells. The function in MET is independent of the enzymatic activity. The protein is Transmembrane O-methyltransferase of Macaca mulatta (Rhesus macaque).